Consider the following 230-residue polypeptide: Endonuclease NucS (230 aa).

Belongs to the NucS endonuclease family.

Its subcellular location is the cytoplasm. Functionally, cleaves both 3' and 5' ssDNA extremities of branched DNA structures. The sequence is that of Endonuclease NucS from Corynebacterium aurimucosum (strain ATCC 700975 / DSM 44827 / CIP 107346 / CN-1) (Corynebacterium nigricans).